A 76-amino-acid polypeptide reads, in one-letter code: U-scoloptoxin(15)-Ssd3b (76 aa).

The N-terminal stretch at Met-1–Ser-23 is a signal peptide.

Post-translationally, contains 2 disulfide bonds. Expressed by the venom gland.

It localises to the secreted. The polypeptide is U-scoloptoxin(15)-Ssd3b (Scolopendra dehaani (Thai centipede)).